A 961-amino-acid chain; its full sequence is ATPase 7, plasma membrane-type (961 aa).

Residues 1-64 (MTDIEALKAI…EKKESKILKF (64 aa)) lie on the Cytoplasmic side of the membrane. The helical transmembrane segment at 65-84 (LGFMWNPLSWVMEAAALMAI) threads the bilayer. The Extracellular portion of the chain corresponds to 85 to 96 (GLAHGGGKPADY). A helical membrane pass occupies residues 97–117 (HDFVGIVVLLLINSTISFVEE). Residues 118–246 (NNAGNAAAAL…GHFQKVLTAI (129 aa)) lie on the Cytoplasmic side of the membrane. A helical transmembrane segment spans residues 247–267 (GNFCICSIAVGMAIEIVVIYG). Topologically, residues 268-276 (LQKRGYRVG) are extracellular. A helical transmembrane segment spans residues 277-294 (IDNLLVLLIGGIPIAMPT). Residues 295 to 643 (VLSVTMAIGA…TSRAIFQRMK (349 aa)) are Cytoplasmic-facing. The 4-aspartylphosphate intermediate role is filled by Asp332. Asp588 and Asp592 together coordinate Mg(2+). A helical transmembrane segment spans residues 644–665 (NYTIYAVSITIRIVMGFMLLCV). The Extracellular portion of the chain corresponds to 666 to 670 (FWEFD). Residues 671 to 693 (FPPFMVLVIAILNDGTIMTISKD) form a helical membrane-spanning segment. Over 694–709 (RVKPSPTPDCWKLKEI) the chain is Cytoplasmic. Residues 710-730 (FATGVVLGAYLAIMTVVFFWA) form a helical membrane-spanning segment. Residues 731–764 (AYETNFFHNIFHVRNFNQHHFKMKDKKVAAHLNE) are Extracellular-facing. The helical transmembrane segment at 765 to 785 (QMASAVYLQVSTISQALIFVT) threads the bilayer. The Cytoplasmic portion of the chain corresponds to 786–797 (RSRSWSFVERPG). Residues 798-818 (FLLVIAFLIAQLVASVISAMA) traverse the membrane as a helical segment. The Extracellular portion of the chain corresponds to 819 to 826 (NWPFAGIR). A helical membrane pass occupies residues 827 to 847 (SIGWGWTGVIWIFNIVTYMLL). At 848–961 (DPIKFLVRYA…EDPNSNNYTI (114 aa)) the chain is on the cytoplasmic side. Position 894 is a phosphothreonine (Thr894). Phosphoserine occurs at positions 910 and 942. An interaction with 14-3-3 proteins region spans residues 959–961 (YTI). A Phosphothreonine modification is found at Thr960.

It belongs to the cation transport ATPase (P-type) (TC 3.A.3) family. Type IIIA subfamily. As to quaternary structure, binds to 14-3-3 proteins. The binding is induced by phosphorylation of Thr-960. Binding to 14-3-3 proteins activates the H(+)-ATPase. As to expression, expressed in guard cells, roots and leaves, and barely in mesophyll cells.

It is found in the membrane. It catalyses the reaction ATP + H2O + H(+)(in) = ADP + phosphate + 2 H(+)(out). In terms of biological role, the plasma membrane H(+) ATPase of plants and fungi generates a proton gradient that drives the active transport of nutrients by H(+)-symport. The resulting external acidification and/or internal alkinization may mediate growth responses. This Arabidopsis thaliana (Mouse-ear cress) protein is ATPase 7, plasma membrane-type (AHA7).